A 273-amino-acid chain; its full sequence is Phosphate import ATP-binding protein PstB (273 aa).

Positions 27 to 268 (VTVRNLNFYY…PSDRRTQDYI (242 aa)) constitute an ABC transporter domain. Residue 59-66 (GPSGCGKS) coordinates ATP.

The protein belongs to the ABC transporter superfamily. Phosphate importer (TC 3.A.1.7) family. In terms of assembly, the complex is composed of two ATP-binding proteins (PstB), two transmembrane proteins (PstC and PstA) and a solute-binding protein (PstS).

The protein resides in the cell inner membrane. The catalysed reaction is phosphate(out) + ATP + H2O = ADP + 2 phosphate(in) + H(+). In terms of biological role, part of the ABC transporter complex PstSACB involved in phosphate import. Responsible for energy coupling to the transport system. This Bradyrhizobium diazoefficiens (strain JCM 10833 / BCRC 13528 / IAM 13628 / NBRC 14792 / USDA 110) protein is Phosphate import ATP-binding protein PstB.